The primary structure comprises 351 residues: MINHKQSLKDLTLNELQEYFSRKGWQQFRAKQIFDWMYIQQVDSIEVMSNIPKKLRQELMENCTINDLELDSNNIYTSPTDGTIKFLSVLKDGIGVETTIMKYDYGNTVCISSQAGCNMNCVFCASTTGGKERDLSPGEMIDQVLMANKVLPGSESINNIVVMGSGEPLENYQHLIKFLKIVNDGKGLNIGMRHITVSTCGLVPEIYNLAEEELQLNLAISLHAPNDELRNKLIPLNKIYPIHELLEACQVYFQKTGRRITFEYVLIKDFNDSIDLAKELSETLTALKMPVHVNLIPFNPVEETKFTAPPSSRISDFKNNLQSNNIGVTVRKERGVDVDGACGQLRSKVMR.

The active-site Proton acceptor is Glu97. The 235-residue stretch at 103-337 (YDYGNTVCIS…VTVRKERGVD (235 aa)) folds into the Radical SAM core domain. Cys110 and Cys342 form a disulfide bridge. Positions 117, 121, and 124 each coordinate [4Fe-4S] cluster. S-adenosyl-L-methionine contacts are provided by residues 166 to 167 (GE), Ser198, 221 to 223 (SLH), and Asn299. Cys342 acts as the S-methylcysteine intermediate in catalysis.

It belongs to the radical SAM superfamily. RlmN family. [4Fe-4S] cluster serves as cofactor.

The protein localises to the cytoplasm. It carries out the reaction adenosine(2503) in 23S rRNA + 2 reduced [2Fe-2S]-[ferredoxin] + 2 S-adenosyl-L-methionine = 2-methyladenosine(2503) in 23S rRNA + 5'-deoxyadenosine + L-methionine + 2 oxidized [2Fe-2S]-[ferredoxin] + S-adenosyl-L-homocysteine. The catalysed reaction is adenosine(37) in tRNA + 2 reduced [2Fe-2S]-[ferredoxin] + 2 S-adenosyl-L-methionine = 2-methyladenosine(37) in tRNA + 5'-deoxyadenosine + L-methionine + 2 oxidized [2Fe-2S]-[ferredoxin] + S-adenosyl-L-homocysteine. Specifically methylates position 2 of adenine 2503 in 23S rRNA and position 2 of adenine 37 in tRNAs. This Natranaerobius thermophilus (strain ATCC BAA-1301 / DSM 18059 / JW/NM-WN-LF) protein is Probable dual-specificity RNA methyltransferase RlmN.